Here is a 187-residue protein sequence, read N- to C-terminus: 1,6-anhydro-N-acetylmuramyl-L-alanine amidase AmpD (187 aa).

One can recognise an N-acetylmuramoyl-L-alanine amidase domain in the interval 30–167 (LLVVHNISLP…APERKTDPGP (138 aa)). Histidine 34 contributes to the Zn(2+) binding site. Residue glutamate 116 is the Proton acceptor of the active site. Residues histidine 154 and aspartate 164 each contribute to the Zn(2+) site.

Belongs to the N-acetylmuramoyl-L-alanine amidase 2 family. Requires Zn(2+) as cofactor.

The protein resides in the cytoplasm. It carries out the reaction Hydrolyzes the link between N-acetylmuramoyl residues and L-amino acid residues in certain cell-wall glycopeptides.. Amidase activity is inhibited by metal chelators such as EDTA, dipicolinic acid or 1,10-phenanthroline. In terms of biological role, involved in cell wall peptidoglycan recycling. Specifically cleaves the amide bond between the lactyl group of N-acetylmuramic acid and the alpha-amino group of the L-alanine in degradation products containing an anhydro N-acetylmuramyl moiety. Is also involved in beta-lactamase induction. The polypeptide is 1,6-anhydro-N-acetylmuramyl-L-alanine amidase AmpD (Citrobacter freundii).